We begin with the raw amino-acid sequence, 244 residues long: Ribosomal RNA large subunit methyltransferase E (244 aa).

Positions 81, 83, 109, 125, and 149 each coordinate S-adenosyl-L-methionine. Lysine 189 (proton acceptor) is an active-site residue.

Belongs to the class I-like SAM-binding methyltransferase superfamily. RNA methyltransferase RlmE family.

It is found in the cytoplasm. The catalysed reaction is uridine(2552) in 23S rRNA + S-adenosyl-L-methionine = 2'-O-methyluridine(2552) in 23S rRNA + S-adenosyl-L-homocysteine + H(+). In terms of biological role, specifically methylates the uridine in position 2552 of 23S rRNA at the 2'-O position of the ribose in the fully assembled 50S ribosomal subunit. The chain is Ribosomal RNA large subunit methyltransferase E from Cereibacter sphaeroides (strain ATCC 17029 / ATH 2.4.9) (Rhodobacter sphaeroides).